The sequence spans 153 residues: SKP1-like protein 5 (153 aa).

Residues 90 to 153 (MMAANYLNIQ…IREENQWAFQ (64 aa)) are interaction with the F-box domain of F-box proteins.

Belongs to the SKP1 family. As to quaternary structure, part of a SCF (SKP1-cullin-F-box) protein ligase complex. Interacts with PP2A13. In terms of tissue distribution, restricted to inflorescences, especially in the inflorescence meristem (IM).

It localises to the nucleus. It participates in protein modification; protein ubiquitination. Involved in ubiquitination and subsequent proteasomal degradation of target proteins. Together with CUL1, RBX1 and a F-box protein, it forms a SCF E3 ubiquitin ligase complex. The functional specificity of this complex depends on the type of F-box protein. In the SCF complex, it serves as an adapter that links the F-box protein to CUL1. In Arabidopsis thaliana (Mouse-ear cress), this protein is SKP1-like protein 5 (ASK5).